The following is a 420-amino-acid chain: Gamma-glutamyl phosphate reductase (420 aa).

It belongs to the gamma-glutamyl phosphate reductase family.

It localises to the cytoplasm. The enzyme catalyses L-glutamate 5-semialdehyde + phosphate + NADP(+) = L-glutamyl 5-phosphate + NADPH + H(+). The protein operates within amino-acid biosynthesis; L-proline biosynthesis; L-glutamate 5-semialdehyde from L-glutamate: step 2/2. Functionally, catalyzes the NADPH-dependent reduction of L-glutamate 5-phosphate into L-glutamate 5-semialdehyde and phosphate. The product spontaneously undergoes cyclization to form 1-pyrroline-5-carboxylate. The protein is Gamma-glutamyl phosphate reductase of Neisseria meningitidis serogroup B (strain ATCC BAA-335 / MC58).